The primary structure comprises 828 residues: Periplasmic nitrate reductase (828 aa).

Positions 1 to 31 (MKLSRRSFMKANAVAAAAAAAGLSVPGVARA) form a signal peptide, tat-type signal. The 57-residue stretch at 39–95 (IKWDKAPCRFCGTGCGVLVGTQQGRVVACQGDPDAPVNRGLNCIKGYFLPKIMYGKD) folds into the 4Fe-4S Mo/W bis-MGD-type domain. Residues Cys46, Cys49, Cys53, and Cys81 each contribute to the [4Fe-4S] cluster site. Residues Lys83, Gln150, Asn175, Cys179, 212–219 (WGANMAEM), 243–247 (STYQH), 262–264 (QSD), Met372, Gln376, Asn482, 508–509 (SD), Lys531, Asp558, and 718–727 (TGRVLEHWHT) contribute to the Mo-bis(molybdopterin guanine dinucleotide) site. Phe794 serves as a coordination point for substrate. Residues Asn802 and Lys819 each coordinate Mo-bis(molybdopterin guanine dinucleotide).

Belongs to the prokaryotic molybdopterin-containing oxidoreductase family. NasA/NapA/NarB subfamily. Component of the periplasmic nitrate reductase NapAB complex composed of NapA and NapB. [4Fe-4S] cluster is required as a cofactor. The cofactor is Mo-bis(molybdopterin guanine dinucleotide). In terms of processing, predicted to be exported by the Tat system. The position of the signal peptide cleavage has not been experimentally proven.

It is found in the periplasm. It carries out the reaction 2 Fe(II)-[cytochrome] + nitrate + 2 H(+) = 2 Fe(III)-[cytochrome] + nitrite + H2O. Functionally, catalytic subunit of the periplasmic nitrate reductase complex NapAB. Receives electrons from NapB and catalyzes the reduction of nitrate to nitrite. The polypeptide is Periplasmic nitrate reductase (Shigella boydii serotype 18 (strain CDC 3083-94 / BS512)).